The sequence spans 132 residues: Small ribosomal subunit protein uS11 (132 aa).

Belongs to the universal ribosomal protein uS11 family. Part of the 30S ribosomal subunit. Interacts with proteins S7 and S18. Binds to IF-3.

Its function is as follows. Located on the platform of the 30S subunit, it bridges several disparate RNA helices of the 16S rRNA. Forms part of the Shine-Dalgarno cleft in the 70S ribosome. The polypeptide is Small ribosomal subunit protein uS11 (Chlamydia caviae (strain ATCC VR-813 / DSM 19441 / 03DC25 / GPIC) (Chlamydophila caviae)).